The sequence spans 106 residues: Small ribosomal subunit protein uS10 (106 aa).

The protein belongs to the universal ribosomal protein uS10 family. Part of the 30S ribosomal subunit.

In terms of biological role, involved in the binding of tRNA to the ribosomes. The protein is Small ribosomal subunit protein uS10 of Archaeoglobus fulgidus (strain ATCC 49558 / DSM 4304 / JCM 9628 / NBRC 100126 / VC-16).